A 400-amino-acid polypeptide reads, in one-letter code: Transposase for insertion sequence element ISRM3 (400 aa).

The protein belongs to the transposase mutator family.

Required for the transposition of the insertion element. The polypeptide is Transposase for insertion sequence element ISRM3 (Rhizobium meliloti (strain 1021) (Ensifer meliloti)).